The chain runs to 339 residues: Putative zinc metalloprotease FN1322 (339 aa).

A Zn(2+)-binding site is contributed by histidine 17. Glutamate 18 is a catalytic residue. Histidine 21 contributes to the Zn(2+) binding site. 3 helical membrane-spanning segments follow: residues phenylalanine 88–alanine 110, phenylalanine 262–leucine 284, and glycine 318–tryptophan 335. Residues phenylalanine 96 to lysine 179 form the PDZ domain.

The protein belongs to the peptidase M50B family. Requires Zn(2+) as cofactor.

It is found in the cell membrane. This is Putative zinc metalloprotease FN1322 from Fusobacterium nucleatum subsp. nucleatum (strain ATCC 25586 / DSM 15643 / BCRC 10681 / CIP 101130 / JCM 8532 / KCTC 2640 / LMG 13131 / VPI 4355).